Reading from the N-terminus, the 217-residue chain is Protein-L-isoaspartate O-methyltransferase (217 aa).

S67 is a catalytic residue.

Belongs to the methyltransferase superfamily. L-isoaspartyl/D-aspartyl protein methyltransferase family.

Its subcellular location is the cytoplasm. It carries out the reaction [protein]-L-isoaspartate + S-adenosyl-L-methionine = [protein]-L-isoaspartate alpha-methyl ester + S-adenosyl-L-homocysteine. Functionally, catalyzes the methyl esterification of L-isoaspartyl residues in peptides and proteins that result from spontaneous decomposition of normal L-aspartyl and L-asparaginyl residues. It plays a role in the repair and/or degradation of damaged proteins. This Azoarcus sp. (strain BH72) protein is Protein-L-isoaspartate O-methyltransferase.